We begin with the raw amino-acid sequence, 599 residues long: Stromal 70 kDa heat shock-related protein, chloroplastic (599 aa).

The interval 545–573 (NQPGAGGEPGAAQAQHQEQSSARQIQRAK) is disordered. A compositionally biased stretch (low complexity) spans 554 to 568 (GAAQAQHQEQSSARQ).

Belongs to the heat shock protein 70 family.

It is found in the plastid. It localises to the chloroplast stroma. Interacts with newly imported chloroplast proteins to assist in their maturation. The sequence is that of Stromal 70 kDa heat shock-related protein, chloroplastic (CHSP70) from Spinacia oleracea (Spinach).